The following is a 200-amino-acid chain: Putative protein ATXN8OS (200 aa).

The disordered stretch occupies residues 19-39; that stretch reads PFSGLKEEEEEDGEDDEEEEE. Over residues 25–39 the composition is skewed to acidic residues; the sequence is EEEEEDGEDDEEEEE.

In terms of tissue distribution, expressed in brain. Expressed in muscle tissues (at protein level).

It is found in the cytoplasm. This Homo sapiens (Human) protein is Putative protein ATXN8OS.